Here is a 255-residue protein sequence, read N- to C-terminus: Small ribosomal subunit protein uS2 (255 aa).

The disordered stretch occupies residues 231-255; that stretch reads RLQTGAEEEFSTEGEEVVEETPAEA. A compositionally biased stretch (acidic residues) spans 236–255; that stretch reads AEEEFSTEGEEVVEETPAEA.

The protein belongs to the universal ribosomal protein uS2 family.

The protein is Small ribosomal subunit protein uS2 of Geobacter sp. (strain M21).